The following is a 930-amino-acid chain: MQRYDIIRMIGKGGMGEVYLAYDPVCSRKVALKRIREDLSDNELLKKRFLREAKIAADLVHPGVVPVFTICSDSDPVYYTMPYIEGYTLKSLLKSVWQCDSLPKDLAEQTSVATFLSIFHKICSTVEYVHSRGILHRDLKPDNILLGLFSEVVILDWGAALSKEMEEDFLSDIDVRIPGSLFSNMTIPGKIVGTPDYMAPERLRGTPASESTDIYALGVILYQMLTLSFPYRKKKGQKISLRHQISFPEEIAPHREIPPFLSQVVMRALAADPRERYRSVSALKADIEQHLQGSPEWTPKIVLHTQDRECWKFHEPILLSKYFPMLEVSPALWYSLAISKIESFSEVRLEYTLLRKGLEEGFGILLPPSEGVDHGDFYHGYGFWLHIKENILSVSLVKNGLEIQKTSRHIDGNKEKFFIAFEKQNHRLSLIIDNIVWTIHMDYLPARGGRIGVIIQDVADVCGNIVVLESSGSLQVSCLAVPDAFLNEKLYERAITFYRRIVESFPGRKEGYEAQFRIGIALLEKASENSDSEGFIQALEEFSTLHNSVAAPLEYLGKALVYQRLGEYNEEVKSLLLALKRYCQRPEISRVRDHVVYRLHEALYSNHRISLVFMLLALHVAPESINASEEEHFLQNLHGKIQDTLFCNLDISPVDFRSSKMELLLSYWSGFTPFLLGLFQRSWDLKDYRALADIFYTAADLGNKEFIEEYSGILRENIRTTTFSKEIVEILPDQLLCFLSGLEALTLQESIEKVFDGIENLDPVLILYLFDLFAKDALIHGRGEEILKAIALVEKYISPQQRYRYLLPYEVLSYLWMKDANKVYDLLSSYDESSWIDDSSHAFVLYGYWLALAEDSSLAYLHLSGCREDSVFPRALIGVFCSPLGICEEQLSYQERRQLLLQKFIFFHCLGNSEERDKCRTAYDSKERSL.

In terms of domain architecture, Protein kinase spans Tyr4–Leu291. ATP contacts are provided by residues Ile10–Val18 and Lys33. The active-site Proton acceptor is the Asp138.

It belongs to the protein kinase superfamily. Ser/Thr protein kinase family. Post-translationally, autophosphorylated on serine and threonine residues.

The enzyme catalyses L-seryl-[protein] + ATP = O-phospho-L-seryl-[protein] + ADP + H(+). The catalysed reaction is L-threonyl-[protein] + ATP = O-phospho-L-threonyl-[protein] + ADP + H(+). Together with the serine/threonine kinase Pkn1, may play a role in the specific interactions with host proteins during intracellular growth. The polypeptide is Serine/threonine-protein kinase PknD (Chlamydia caviae (strain ATCC VR-813 / DSM 19441 / 03DC25 / GPIC) (Chlamydophila caviae)).